A 124-amino-acid chain; its full sequence is Immunoglobulin lambda variable 5-52 (124 aa).

Positions 1–19 (MAWTLLLLVLLSHCTGSLS) are cleaved as a signal peptide. A framework-1 region spans residues 20–44 (QPVLTQPSSHSASSGASVRLTCMLS). The Ig-like domain maps to 21 to 124 (PVLTQPSSHS…CGTWHSNSKT (104 aa)). C41 and C115 are oxidised to a cystine. The interval 45–53 (SGFSVGDFW) is complementarity-determining-1. Residues 54–70 (IRWYQQKPGNPPRYLLY) are framework-2. Residues 71–77 (YHSDSNK) are complementarity-determining-2. A framework-3 region spans residues 78–115 (GQGSGVPSRFSGSNDASANAGILRISGLQPEDEADYYC). The tract at residues 116–124 (GTWHSNSKT) is complementarity-determining-3.

Immunoglobulins are composed of two identical heavy chains and two identical light chains; disulfide-linked.

It is found in the secreted. The protein localises to the cell membrane. Its function is as follows. V region of the variable domain of immunoglobulin light chains that participates in the antigen recognition. Immunoglobulins, also known as antibodies, are membrane-bound or secreted glycoproteins produced by B lymphocytes. In the recognition phase of humoral immunity, the membrane-bound immunoglobulins serve as receptors which, upon binding of a specific antigen, trigger the clonal expansion and differentiation of B lymphocytes into immunoglobulins-secreting plasma cells. Secreted immunoglobulins mediate the effector phase of humoral immunity, which results in the elimination of bound antigens. The antigen binding site is formed by the variable domain of one heavy chain, together with that of its associated light chain. Thus, each immunoglobulin has two antigen binding sites with remarkable affinity for a particular antigen. The variable domains are assembled by a process called V-(D)-J rearrangement and can then be subjected to somatic hypermutations which, after exposure to antigen and selection, allow affinity maturation for a particular antigen. The polypeptide is Immunoglobulin lambda variable 5-52 (Homo sapiens (Human)).